The sequence spans 611 residues: Elongation factor 4 1 (611 aa).

Positions 11–193 (QHIRNFSIVA…QIVHKIPAPQ (183 aa)) constitute a tr-type G domain. GTP contacts are provided by residues 23–28 (DHGKST) and 140–143 (NKID).

It belongs to the TRAFAC class translation factor GTPase superfamily. Classic translation factor GTPase family. LepA subfamily.

The protein resides in the cell membrane. The catalysed reaction is GTP + H2O = GDP + phosphate + H(+). Required for accurate and efficient protein synthesis under certain stress conditions. May act as a fidelity factor of the translation reaction, by catalyzing a one-codon backward translocation of tRNAs on improperly translocated ribosomes. Back-translocation proceeds from a post-translocation (POST) complex to a pre-translocation (PRE) complex, thus giving elongation factor G a second chance to translocate the tRNAs correctly. Binds to ribosomes in a GTP-dependent manner. The polypeptide is Elongation factor 4 1 (Lactiplantibacillus plantarum (strain ATCC BAA-793 / NCIMB 8826 / WCFS1) (Lactobacillus plantarum)).